A 285-amino-acid chain; its full sequence is Urease accessory protein UreD 1 (285 aa).

The protein belongs to the UreD family. UreD, UreF and UreG form a complex that acts as a GTP-hydrolysis-dependent molecular chaperone, activating the urease apoprotein by helping to assemble the nickel containing metallocenter of UreC. The UreE protein probably delivers the nickel.

It localises to the cytoplasm. Its function is as follows. Required for maturation of urease via the functional incorporation of the urease nickel metallocenter. The polypeptide is Urease accessory protein UreD 1 (Pseudomonas syringae pv. syringae (strain B728a)).